Reading from the N-terminus, the 230-residue chain is C-methyltransferase CouO (230 aa).

Belongs to the methyltransferase superfamily.

It participates in antibiotic biosynthesis. Mediates C-methylation at the 8-position of the aminocoumarin moieties in coumermycin A1 in the biosynthetic pathway of coumermycin antibiotic. Active on both mono- and bis-amides for mono- and di-C-methylation adjacent to the phenolic hydroxyl before it is glycosylated by CouM. The polypeptide is C-methyltransferase CouO (couO) (Streptomyces rishiriensis).